Here is a 564-residue protein sequence, read N- to C-terminus: Glutamate--tRNA ligase (564 aa).

Positions 107-117 (PNPNGPPTLGS) match the 'HIGH' region motif.

This sequence belongs to the class-I aminoacyl-tRNA synthetase family. Glutamate--tRNA ligase type 2 subfamily.

It localises to the cytoplasm. The catalysed reaction is tRNA(Glu) + L-glutamate + ATP = L-glutamyl-tRNA(Glu) + AMP + diphosphate. Functionally, catalyzes the attachment of glutamate to tRNA(Glu) in a two-step reaction: glutamate is first activated by ATP to form Glu-AMP and then transferred to the acceptor end of tRNA(Glu). This is Glutamate--tRNA ligase from Methanothrix thermoacetophila (strain DSM 6194 / JCM 14653 / NBRC 101360 / PT) (Methanosaeta thermophila).